We begin with the raw amino-acid sequence, 593 residues long: Gamma-humulene synthase (593 aa).

The span at 1-26 (MAQISESVSPSTDLKSTESSITSNRH) shows a compositional bias: polar residues. The segment at 1–34 (MAQISESVSPSTDLKSTESSITSNRHGNMWEDDR) is disordered. Residues aspartate 343, aspartate 347, aspartate 488, and glutamate 496 each coordinate Mg(2+). The DDXXD motif signature appears at 343–347 (DDLYD).

Belongs to the terpene synthase family. Tpsd subfamily. Requires Mg(2+) as cofactor. The cofactor is K(+).

The protein resides in the cytoplasm. It carries out the reaction (2E,6E)-farnesyl diphosphate = gamma-humulene + diphosphate. The enzyme catalyses (2E,6E)-farnesyl diphosphate = sibirene + diphosphate. The catalysed reaction is (2E,6E)-farnesyl diphosphate = longifolene + diphosphate. It catalyses the reaction (2E,6E)-farnesyl diphosphate = beta-himachalene + diphosphate. It carries out the reaction (2E,6E)-farnesyl diphosphate = gamma-himachalene + diphosphate. The enzyme catalyses (2E,6E)-farnesyl diphosphate = alpha-himachalene + diphosphate. It functions in the pathway terpene metabolism; oleoresin biosynthesis. Involved in defensive oleoresin formation in conifers in response to insect attack or other injury. Involved in 52 sesquiterpene (C15) olefins biosynthesis. This is Gamma-humulene synthase (ag5) from Abies grandis (Grand fir).